Reading from the N-terminus, the 187-residue chain is Cytochrome b-245 chaperone 1 (187 aa).

The chain crosses the membrane as a helical span at residues 20–42 (GIRSWSLLVGILSIGLAAAYYSG). Ser168 is modified (phosphoserine).

The protein belongs to the CYBC1 family. In terms of assembly, interacts with CYBB; CYBC1 may act as a chaperone stabilizing Cytochrome b-245 heterodimer. As to expression, highly expressed in macrophages, neutrophils and monocytes.

It is found in the endoplasmic reticulum membrane. Functions as a chaperone necessary for a stable expression of the CYBA and CYBB subunits of the cytochrome b-245 heterodimer. Controls the phagocyte respiratory burst and is essential for innate immunity. The polypeptide is Cytochrome b-245 chaperone 1 (Homo sapiens (Human)).